The chain runs to 238 residues: Purine nucleoside phosphorylase DeoD-type (238 aa).

Residue His-4 participates in a purine D-ribonucleoside binding. Phosphate contacts are provided by residues Gly-20, Arg-24, Arg-43, and 87–90 (RVGS). A purine D-ribonucleoside contacts are provided by residues 179-181 (EME) and 203-204 (SD). Asp-204 serves as the catalytic Proton donor.

Belongs to the PNP/UDP phosphorylase family. As to quaternary structure, homohexamer; trimer of homodimers.

It catalyses the reaction a purine D-ribonucleoside + phosphate = a purine nucleobase + alpha-D-ribose 1-phosphate. It carries out the reaction a purine 2'-deoxy-D-ribonucleoside + phosphate = a purine nucleobase + 2-deoxy-alpha-D-ribose 1-phosphate. In terms of biological role, catalyzes the reversible phosphorolytic breakdown of the N-glycosidic bond in the beta-(deoxy)ribonucleoside molecules, with the formation of the corresponding free purine bases and pentose-1-phosphate. The protein is Purine nucleoside phosphorylase DeoD-type of Haemophilus influenzae (strain 86-028NP).